We begin with the raw amino-acid sequence, 1004 residues long: Protein phosphatase 1 regulatory subunit 12A (1004 aa).

The important for interaction with PPP1CB stretch occupies residues 35–38 (KVKF). ANK repeat units follow at residues 39 to 68 (DDGA…DINY), 72 to 101 (DGLT…NINQ), 105 to 134 (EGWI…HVGA), 138 to 164 (EGDT…RQGV), 198 to 227 (SGGT…DVNI), and 231 to 260 (DGWT…DMEA). The segment covering 291-300 (HSEKREKKSP) has biased composition (basic and acidic residues). Positions 291-920 (HSEKREKKSP…SYLEDRKPYC (630 aa)) are disordered. The span at 302-316 (IESTANLDNNQTQKT) shows a compositional bias: polar residues. 2 stretches are compositionally biased toward basic and acidic residues: residues 318–329 (KNKETLIMEQEK) and 336–353 (SLEH…KDES). The span at 357 to 369 (SEEEEDDDSESEA) shows a compositional bias: acidic residues. The segment covering 378–392 (ANANTTSTQSASMTA) has biased composition (polar residues). Positions 417 to 427 (SPKEEERKDES) are enriched in basic and acidic residues. Low complexity predominate over residues 464 to 475 (RSASSPRLSSSL). Residues 476–486 (DNKEKEKDGKG) show a composition bias toward basic and acidic residues. A compositionally biased stretch (low complexity) spans 514 to 525 (SSASSIRSGSSY). The segment covering 528 to 538 (RKWEEDVKKNS) has biased composition (basic and acidic residues). The span at 539–554 (LNEGPTSLNTSYQRSG) shows a compositional bias: polar residues. Low complexity-rich tracts occupy residues 564 to 578 (VSSN…VTSS) and 587 to 602 (ASAN…STSA). Basic and acidic residues predominate over residues 613 to 624 (WAEDSTEKEKDS). The span at 625 to 659 (VPTAVTVPVAPSVVNAAATTTAMTTATSGTVSSTS) shows a compositional bias: low complexity. Residues 672-681 (VRDEESESQR) show a composition bias toward basic and acidic residues. Residues 682–692 (KARSRQARQSR) are compositionally biased toward basic residues. Threonine 695 is modified (phosphothreonine; by ROCK2). Over residues 717 to 765 (RTREQENEEKEKEEKEKQDKEKQEEKKESETKDDDYRQRYSRTVEEPYH) the composition is skewed to basic and acidic residues. The segment covering 770–793 (TSTSTSTSSTSSLSTSTSSLSSSS) has biased composition (low complexity). Residues 794 to 808 (QLNRPNSLIGITSAY) show a composition bias toward polar residues. The span at 812–837 (GTKESEREGGKKEEEKEEDKSQPKSI) shows a compositional bias: basic and acidic residues. The span at 838 to 849 (RERRRPREKRRS) shows a compositional bias: basic residues. Threonine 850 is subject to Phosphothreonine; by ROCK2. Residues 864–880 (QEHQSDSEEGTNKKETQ) are compositionally biased toward basic and acidic residues. The segment covering 881 to 896 (SDSLSRYDTGSLSVSS) has biased composition (polar residues).

As to quaternary structure, PP1 comprises a catalytic subunit, PPP1CA, PPP1CB or PPP1CC, and one or several targeting or regulatory subunits. PPP1R12A mediates binding to myosin. Post-translationally, phosphorylated by CIT (Rho-associated kinase) and by ROCK2 on serine and threonine residues. Phosphorylation at Thr-695 leads to inhibition of myosin phosphatase activity. Phosphorylation at Thr-850 abolishes myosin binding. May be phosphorylated at Thr-695 by DMPK; may inhibit the myosin phosphatase activity. Detected in brain, lung, aorta, heart, gizzard, stomach, oviduct, spleen, kidney and small intestine.

The protein localises to the cytoplasm. It is found in the cytoskeleton. Its subcellular location is the stress fiber. Its function is as follows. Regulates myosin phosphatase activity. In Gallus gallus (Chicken), this protein is Protein phosphatase 1 regulatory subunit 12A (PPP1R12A).